Reading from the N-terminus, the 389-residue chain is tRNA N(3)-cytidine methyltransferase METTL2 (389 aa).

Residues 1–20 (MAASFPEGVPETEDGKRPQF) form a disordered region. Residues Trp-78, Tyr-82, Gly-181, Asp-206, Asp-232, Leu-233, and Ile-253 each contribute to the S-adenosyl-L-methionine site.

The protein belongs to the methyltransferase superfamily. METL family. As to quaternary structure, monomer. Interacts with DALRD3.

The protein resides in the cytoplasm. The enzyme catalyses cytidine(32) in tRNA(Thr) + S-adenosyl-L-methionine = N(3)-methylcytidine(32) in tRNA(Thr) + S-adenosyl-L-homocysteine + H(+). It carries out the reaction cytidine(32) in tRNA(Arg)(CCU) + S-adenosyl-L-methionine = N(3)-methylcytidine(32) in tRNA(Arg)(CCU) + S-adenosyl-L-homocysteine + H(+). In terms of biological role, S-adenosyl-L-methionine-dependent methyltransferase that mediates N(3)-methylcytidine modification of residue 32 of the tRNA anticodon loop of tRNA(Thr)(UGU) and tRNA(Arg)(CCU). N(3)-methylcytidine methylation by METTL2 requires the N6-threonylcarbamoylation of tRNA (t6A37) by the EKC/KEOPS complex as prerequisite. The polypeptide is tRNA N(3)-cytidine methyltransferase METTL2 (Mus musculus (Mouse)).